We begin with the raw amino-acid sequence, 400 residues long: MTGASTTTATMRQRWQAVMMNNYGTPPIALASGDGAVVTDVDGRTYIDLLGGIAVNVLGHRHPAVIEAVTRQMSTLGHTSNLYATEPGIALAEELVALLGADQRTRVFFCNSGAEANEAAFKLSRLTGRTKLVAAHDAFHGRTMGSLALTGQPAKQTPFAPLPGDVTHVGYGDVDALAAAVDDHTAAVFLEPIMGESGVVVPPAGYLAAARDITARRGALLVLDEVQTGMGRTGAFFAHQHDGITPDVVTLAKGLGGGLPIGACLAVGPAAELLTPGLHGSTFGGNPVCAAAALAVLRVLASDGLVRRAEVLGKSLRHGIEALGHPLIDHVRGRGLLLGIALTAPHAKDAEATARDAGYLVNAAAPDVIRLAPPLIIAEAQLDGFVAALPAILDRAVGAP.

Pyridoxal 5'-phosphate-binding positions include 113 to 114 and Phe139; that span reads GA. Arg142 provides a ligand contact to N(2)-acetyl-L-ornithine. 224–227 serves as a coordination point for pyridoxal 5'-phosphate; it reads DEVQ. Position 253 is an N6-(pyridoxal phosphate)lysine (Lys253). Ser281 serves as a coordination point for N(2)-acetyl-L-ornithine. Thr282 is a binding site for pyridoxal 5'-phosphate.

This sequence belongs to the class-III pyridoxal-phosphate-dependent aminotransferase family. ArgD subfamily. In terms of assembly, homodimer. Pyridoxal 5'-phosphate serves as cofactor.

It localises to the cytoplasm. It catalyses the reaction N(2)-acetyl-L-ornithine + 2-oxoglutarate = N-acetyl-L-glutamate 5-semialdehyde + L-glutamate. Its pathway is amino-acid biosynthesis; L-arginine biosynthesis; N(2)-acetyl-L-ornithine from L-glutamate: step 4/4. The sequence is that of Acetylornithine aminotransferase from Mycobacterium bovis (strain ATCC BAA-935 / AF2122/97).